We begin with the raw amino-acid sequence, 199 residues long: Superoxide dismutase [Cu-Zn] (199 aa).

The signal sequence occupies residues 1 to 22; that stretch reads MKLTKVALFSLGLFGFSSMALA. Positions 92, 94, and 117 each coordinate Cu cation. Residues Cys99 and Cys195 are joined by a disulfide bond. Residues His117, His126, His135, and Asp138 each contribute to the Zn(2+) site. His173 is a Cu cation binding site.

The protein belongs to the Cu-Zn superoxide dismutase family. As to quaternary structure, homodimer. Cu cation serves as cofactor. Zn(2+) is required as a cofactor.

It localises to the periplasm. The enzyme catalyses 2 superoxide + 2 H(+) = H2O2 + O2. Its function is as follows. Destroys radicals which are normally produced within the cells and which are toxic to biological systems. May play a role in the interactive biology of organisms with their hosts and so contribute to their capacity to cause disease. The protein is Superoxide dismutase [Cu-Zn] (sodC) of Haemophilus ducreyi (strain 35000HP / ATCC 700724).